A 271-amino-acid chain; its full sequence is Protein CDV3 homolog (271 aa).

Residues 37–47 are compositionally biased toward basic and acidic residues; that stretch reads KREVVKPKKPE. Disordered regions lie at residues 37–151 and 186–271; these read KREV…GHGP and SQQA…DEAS. Over residues 48-61 the composition is skewed to low complexity; sequence VAAGGVAVVGENEN. A compositionally biased stretch (acidic residues) spans 73–82; sequence VEEEWKEFEE. Over residues 95–114 the composition is skewed to polar residues; sequence QLSTISSARSRTAQESSESQ. Ser-134 carries the post-translational modification Phosphoserine. A compositionally biased stretch (basic and acidic residues) spans 224-242; sequence RPEEQRKKKNEPAFEEVRH.

The protein belongs to the CDV3 family.

The protein is Protein CDV3 homolog of Drosophila melanogaster (Fruit fly).